The sequence spans 1124 residues: tRNA (34-2'-O)-methyltransferase regulator WDR6 (1124 aa).

M1 is subject to N-acetylmethionine. 19 WD repeats span residues 53-97, 105-143, 147-189, 200-238, 247-285, 289-327, 335-376, 381-422, 425-470, 476-520, 557-596, 602-640, 643-682, 743-789, 852-897, 905-950, 974-1015, 1039-1076, and 1082-1124; these read MKRV…IVKI, RELW…LYDP, CSLQ…VWYP, VPDR…IWKV, RVQN…VWSH, ILQA…LWHL, SGVF…LYDL, WEQL…VVPI, PTAA…ISAA, IFVK…LYPS, PMST…FVRG, VLRQ…VWSP, HEKL…LYRA, LIDI…VWGV, RHRH…LFLL, QLLA…FWDL, GSPC…VFVL, EEYS…FWRL, and TFMN…NWYD.

This sequence belongs to the WD repeat WDR6 family. Interacts with FTSJ1; the interaction is direct, and required for 2'-O-methylation of position 34 in substrate tRNAs. Interacts with IRS4. Interacts with STK11/LKB1.

The protein resides in the cytoplasm. In terms of biological role, together with methyltransferase FTSJ1, methylates the 2'-O-ribose of nucleotides at position 34 of the tRNA anticodon loop of substrate tRNAs. Required for the correct positioning of the substrate tRNA for methylation. Required to suppress amino acid starvation-induced autophagy. Enhances the STK11/LKB1-induced cell growth suppression activity. The protein is tRNA (34-2'-O)-methyltransferase regulator WDR6 (WDR6) of Bos taurus (Bovine).